The chain runs to 209 residues: Uracil phosphoribosyltransferase (209 aa).

5-phospho-alpha-D-ribose 1-diphosphate contacts are provided by residues arginine 79, arginine 104, and 131 to 139 (DPMLATGGT). Uracil contacts are provided by residues isoleucine 194 and 199–201 (GDA). Aspartate 200 contacts 5-phospho-alpha-D-ribose 1-diphosphate.

Belongs to the UPRTase family. Mg(2+) is required as a cofactor.

The enzyme catalyses UMP + diphosphate = 5-phospho-alpha-D-ribose 1-diphosphate + uracil. It participates in pyrimidine metabolism; UMP biosynthesis via salvage pathway; UMP from uracil: step 1/1. With respect to regulation, allosterically activated by GTP. Catalyzes the conversion of uracil and 5-phospho-alpha-D-ribose 1-diphosphate (PRPP) to UMP and diphosphate. The protein is Uracil phosphoribosyltransferase of Pseudoalteromonas atlantica (strain T6c / ATCC BAA-1087).